Reading from the N-terminus, the 411-residue chain is Chorismate synthase (411 aa).

2 residues coordinate NADP(+): Arg-40 and Arg-46. FMN-binding positions include 135–137 (RAS) and 256–257 (QA). A disordered region spans residues 278–299 (HDGIARGADGRPRRTSDRAGGI). The segment covering 285-294 (ADGRPRRTSD) has biased composition (basic and acidic residues). FMN is bound by residues Ala-301, 316-320 (KPIAT), and Arg-342.

This sequence belongs to the chorismate synthase family. Homotetramer. FMNH2 serves as cofactor.

It carries out the reaction 5-O-(1-carboxyvinyl)-3-phosphoshikimate = chorismate + phosphate. It functions in the pathway metabolic intermediate biosynthesis; chorismate biosynthesis; chorismate from D-erythrose 4-phosphate and phosphoenolpyruvate: step 7/7. Functionally, catalyzes the anti-1,4-elimination of the C-3 phosphate and the C-6 proR hydrogen from 5-enolpyruvylshikimate-3-phosphate (EPSP) to yield chorismate, which is the branch point compound that serves as the starting substrate for the three terminal pathways of aromatic amino acid biosynthesis. This reaction introduces a second double bond into the aromatic ring system. In Micrococcus luteus (strain ATCC 4698 / DSM 20030 / JCM 1464 / CCM 169 / CCUG 5858 / IAM 1056 / NBRC 3333 / NCIMB 9278 / NCTC 2665 / VKM Ac-2230) (Micrococcus lysodeikticus), this protein is Chorismate synthase.